The following is a 353-amino-acid chain: 4-hydroxy-3-methylbut-2-en-1-yl diphosphate synthase (flavodoxin) (353 aa).

[4Fe-4S] cluster is bound by residues Cys265, Cys268, Cys300, and Glu307.

This sequence belongs to the IspG family. [4Fe-4S] cluster serves as cofactor.

The catalysed reaction is (2E)-4-hydroxy-3-methylbut-2-enyl diphosphate + oxidized [flavodoxin] + H2O + 2 H(+) = 2-C-methyl-D-erythritol 2,4-cyclic diphosphate + reduced [flavodoxin]. It participates in isoprenoid biosynthesis; isopentenyl diphosphate biosynthesis via DXP pathway; isopentenyl diphosphate from 1-deoxy-D-xylulose 5-phosphate: step 5/6. Its function is as follows. Converts 2C-methyl-D-erythritol 2,4-cyclodiphosphate (ME-2,4cPP) into 1-hydroxy-2-methyl-2-(E)-butenyl 4-diphosphate. In Sulfurihydrogenibium sp. (strain YO3AOP1), this protein is 4-hydroxy-3-methylbut-2-en-1-yl diphosphate synthase (flavodoxin).